Here is a 275-residue protein sequence, read N- to C-terminus: Proteasome subunit beta (275 aa).

Positions 1 to 52 are cleaved as a propeptide — removed in mature form; by autocatalysis; sequence MQDTTANQVAANATSSFTEHLQRNRPGLLPYNQPFPAALTGAGSQPLQVPHA. Threonine 53 functions as the Nucleophile in the catalytic mechanism.

The protein belongs to the peptidase T1B family. The 20S proteasome core is composed of 14 alpha and 14 beta subunits that assemble into four stacked heptameric rings, resulting in a barrel-shaped structure. The two inner rings, each composed of seven catalytic beta subunits, are sandwiched by two outer rings, each composed of seven alpha subunits. The catalytic chamber with the active sites is on the inside of the barrel. Has a gated structure, the ends of the cylinder being occluded by the N-termini of the alpha-subunits. Is capped by the proteasome-associated ATPase, ARC.

The protein resides in the cytoplasm. It carries out the reaction Cleavage of peptide bonds with very broad specificity.. Its pathway is protein degradation; proteasomal Pup-dependent pathway. Its activity is regulated as follows. The formation of the proteasomal ATPase ARC-20S proteasome complex, likely via the docking of the C-termini of ARC into the intersubunit pockets in the alpha-rings, may trigger opening of the gate for substrate entry. Interconversion between the open-gate and close-gate conformations leads to a dynamic regulation of the 20S proteasome proteolysis activity. Functionally, component of the proteasome core, a large protease complex with broad specificity involved in protein degradation. This is Proteasome subunit beta from Arthrobacter sp. (strain FB24).